Reading from the N-terminus, the 384-residue chain is Cytochrome b (384 aa).

4 consecutive transmembrane segments (helical) span residues 32–52, 76–98, 113–133, and 179–199; these read FGSLLGVCLVMQLCTGMFLAM, WLLRYAHSNGAGFFFMFVYLHMA, LWNMGVMMFLLMMMTAFMGYC, and FFSLHYLLPFVIAGICCLHLL. Heme b-binding residues include His-82 and His-96. 2 residues coordinate heme b: His-183 and His-197. His-202 is a binding site for a ubiquinone. 4 helical membrane-spanning segments follow: residues 225-245, 289-309, 321-341, and 348-368; these read FLFKDTVTIFAFLFVYFFLIS, MMGVLAMLFAILILFVLPFVD, LSKILFGFFCVNFILLGLIGA, and YIIIGQLATIFYFSYFMILLP.

This sequence belongs to the cytochrome b family. Fungal cytochrome b-c1 complex contains 10 subunits; 3 respiratory subunits, 2 core proteins and 5 low-molecular weight proteins. Cytochrome b-c1 complex is a homodimer. Heme b is required as a cofactor.

The protein localises to the mitochondrion inner membrane. Component of the ubiquinol-cytochrome c reductase complex (complex III or cytochrome b-c1 complex) that is part of the mitochondrial respiratory chain. The b-c1 complex mediates electron transfer from ubiquinol to cytochrome c. Contributes to the generation of a proton gradient across the mitochondrial membrane that is then used for ATP synthesis. This is Cytochrome b (COB) from Starmerella bacillaris (Yeast).